The sequence spans 37 residues: Cytochrome b6-f complex subunit 5 (37 aa).

A helical membrane pass occupies residues 5-25; the sequence is LLSGIILGLIPVTLSGLLVAA.

Belongs to the PetG family. The 4 large subunits of the cytochrome b6-f complex are cytochrome b6, subunit IV (17 kDa polypeptide, PetD), cytochrome f and the Rieske protein, while the 4 small subunits are PetG, PetL, PetM and PetN. The complex functions as a dimer.

It localises to the plastid. The protein localises to the chloroplast thylakoid membrane. Its function is as follows. Component of the cytochrome b6-f complex, which mediates electron transfer between photosystem II (PSII) and photosystem I (PSI), cyclic electron flow around PSI, and state transitions. PetG is required for either the stability or assembly of the cytochrome b6-f complex. The polypeptide is Cytochrome b6-f complex subunit 5 (Porphyra purpurea (Red seaweed)).